Consider the following 547-residue polypeptide: Glucose-6-phosphate isomerase (547 aa).

The active-site Proton donor is Glu-351. Catalysis depends on residues His-382 and Lys-510.

Belongs to the GPI family.

The protein localises to the cytoplasm. The enzyme catalyses alpha-D-glucose 6-phosphate = beta-D-fructose 6-phosphate. It functions in the pathway carbohydrate biosynthesis; gluconeogenesis. It participates in carbohydrate degradation; glycolysis; D-glyceraldehyde 3-phosphate and glycerone phosphate from D-glucose: step 2/4. In terms of biological role, catalyzes the reversible isomerization of glucose-6-phosphate to fructose-6-phosphate. This chain is Glucose-6-phosphate isomerase, found in Saccharophagus degradans (strain 2-40 / ATCC 43961 / DSM 17024).